Reading from the N-terminus, the 426-residue chain is Histidinol dehydrogenase (426 aa).

The NAD(+) site is built by Y126, Q188, and N210. Substrate-binding residues include S233, Q255, and H258. Residues Q255 and H258 each coordinate Zn(2+). Active-site proton acceptor residues include E323 and H324. Substrate contacts are provided by H324, D357, E411, and H416. A Zn(2+)-binding site is contributed by D357. A Zn(2+)-binding site is contributed by H416.

It belongs to the histidinol dehydrogenase family. Zn(2+) serves as cofactor.

The enzyme catalyses L-histidinol + 2 NAD(+) + H2O = L-histidine + 2 NADH + 3 H(+). The protein operates within amino-acid biosynthesis; L-histidine biosynthesis; L-histidine from 5-phospho-alpha-D-ribose 1-diphosphate: step 9/9. Functionally, catalyzes the sequential NAD-dependent oxidations of L-histidinol to L-histidinaldehyde and then to L-histidine. This Heliobacterium mobile (Heliobacillus mobilis) protein is Histidinol dehydrogenase.